The sequence spans 75 residues: Metallothionein-like protein 1 (75 aa).

It belongs to the metallothionein superfamily. Type 15 family.

Metallothioneins have a high content of cysteine residues that bind various heavy metals. The chain is Metallothionein-like protein 1 (ALI1) from Triticum aestivum (Wheat).